The primary structure comprises 31 residues: MLTIISYFGFLFGALTLALILFIGLNKIQLI.

Residues 4–24 (IISYFGFLFGALTLALILFIG) form a helical membrane-spanning segment.

Belongs to the PetL family. As to quaternary structure, the 4 large subunits of the cytochrome b6-f complex are cytochrome b6, subunit IV (17 kDa polypeptide, PetD), cytochrome f and the Rieske protein, while the 4 small subunits are PetG, PetL, PetM and PetN. The complex functions as a dimer.

It localises to the plastid. The protein resides in the chloroplast thylakoid membrane. In terms of biological role, component of the cytochrome b6-f complex, which mediates electron transfer between photosystem II (PSII) and photosystem I (PSI), cyclic electron flow around PSI, and state transitions. PetL is important for photoautotrophic growth as well as for electron transfer efficiency and stability of the cytochrome b6-f complex. This Physcomitrium patens (Spreading-leaved earth moss) protein is Cytochrome b6-f complex subunit 6.